The chain runs to 314 residues: Atrochrysone carboxyl ACP thioesterase AgnL7 (314 aa).

Residues H103, H105, D107, and H108 each contribute to the Zn(2+) site. The Proton donor/acceptor role is filled by D107.

The protein belongs to the metallo-beta-lactamase superfamily. Zn(2+) serves as cofactor.

It catalyses the reaction atrochrysone carboxyl-[ACP] + H2O = atrochrysone carboxylate + holo-[ACP] + H(+). Its pathway is secondary metabolite biosynthesis. Functionally, atrochrysone carboxyl ACP thioesterase; part of the gene cluster that mediates the biosynthesis of agnestins, dihydroxy-xanthone metabolites. The pathway begins with the assembly and cyclization of atrochrysone thioester by the non-reducing polyketide synthase Agnpks1. The atrochrysone carboxyl ACP thioesterase AgnL7 then breaks the thioester bond and releases the atrochrysone carboxylic acid as the first enzyme-free intermediate. The decarboxylase AgnL1 then catalyzes the concerted decarboxylation-elimination required to convert atochrysone carboxylic acid into emodin anthrone, which is further oxidized to emodin by the anthrone oxygenase AgnL2. Emodin then undergoes reduction catalyzed by the oxidoreductase AgnL4 to yield the dihydroquinone tautomer which is the substrate for reduction by the short chain dehydrogenase AgnL6 reduction to produce hydroxyketone, followed by AgnL8 dehydration and likely spontaneous autoxidation to chrysophanol. Baeyer-Villiger oxidation by the oxidase AgnL3 leads to monodictyphenone via cleavage of the C-10/C-10a bond of chrysophanol. Alternative cleavage at the C-4a/C-10 bond of chrysophanol also leads to the formation some cephalone F. Further conversion to agnestins A and B, requires reduction to dihydro-monodictyphenone, oxidation to agnestin C probably via an epoxide, and rearrangement to either agnestin A or agnestin B directly, although agnestin A or agnestin B can also interconvert. Within the cluster, AgnR1 is the only unassigned oxidoreductase present which could be involved in this conversion. However, AgnR1 seems not to be involved in this step, and thus genes involved in the proposed oxidation/reduction may be located elsewhere on the genome. Further agnestin A derivatives are probably formed by spontaneous decarboxylations, dehydrations and methanolysis reactions. The protein is Atrochrysone carboxyl ACP thioesterase AgnL7 of Paecilomyces divaricatus (Penicillium divaricatum).